We begin with the raw amino-acid sequence, 442 residues long: Mannosylglycerate hydrolase (442 aa).

Substrate contacts are provided by residues tyrosine 38, 42–45 (WSWD), tyrosine 90, glutamine 116, and glycine 176. Residue aspartate 178 is the Proton donor of the active site. Substrate is bound by residues arginine 213 and 369–370 (YW). Glutamate 413 functions as the Proton acceptor in the catalytic mechanism.

Belongs to the glycosyl hydrolase 63 family. As to quaternary structure, homodimer in solution.

It catalyses the reaction (2R)-2-O-(alpha-D-mannosyl)-glycerate + H2O = D-mannose + (R)-glycerate. The enzyme catalyses (2R)-2-O-(alpha-D-glucopyranosyl)-glycerate + H2O = (R)-glycerate + D-glucose. Activity is not stimulated by divalent cations and not affected in the presence of EDTA. Its function is as follows. Hydrolase that catalyzes the hydrolysis of mannosylglycerate (MG), a solute produced in response to osmotic stress in thermophiles, into mannose and glycerate. Can also hydrolyze glucosylglycerate (GG) to glucose and glycerate, with similar catalytic efficiency. Is highly specific for MG and GG, and cannot use mannosylglyceramide (MGA), glucosylglycerol, mannosylglucosylglycerate (MGG), glucosylglucosylglycerate (GGG) or trehalose as substrates. The polypeptide is Mannosylglycerate hydrolase (Rubrobacter radiotolerans (Arthrobacter radiotolerans)).